The primary structure comprises 101 residues: Thylakoid-associated protein slr0729 (101 aa).

The protein resides in the cellular thylakoid membrane. This chain is Thylakoid-associated protein slr0729, found in Synechocystis sp. (strain ATCC 27184 / PCC 6803 / Kazusa).